We begin with the raw amino-acid sequence, 150 residues long: UPF0178 protein Shew_2726 (150 aa).

The protein belongs to the UPF0178 family.

In Shewanella loihica (strain ATCC BAA-1088 / PV-4), this protein is UPF0178 protein Shew_2726.